We begin with the raw amino-acid sequence, 256 residues long: Imidazole glycerol phosphate synthase subunit HisF (256 aa).

Residues Asp-12 and Asp-131 contribute to the active site.

The protein belongs to the HisA/HisF family. In terms of assembly, heterodimer of HisH and HisF.

The protein localises to the cytoplasm. It catalyses the reaction 5-[(5-phospho-1-deoxy-D-ribulos-1-ylimino)methylamino]-1-(5-phospho-beta-D-ribosyl)imidazole-4-carboxamide + L-glutamine = D-erythro-1-(imidazol-4-yl)glycerol 3-phosphate + 5-amino-1-(5-phospho-beta-D-ribosyl)imidazole-4-carboxamide + L-glutamate + H(+). The protein operates within amino-acid biosynthesis; L-histidine biosynthesis; L-histidine from 5-phospho-alpha-D-ribose 1-diphosphate: step 5/9. In terms of biological role, IGPS catalyzes the conversion of PRFAR and glutamine to IGP, AICAR and glutamate. The HisF subunit catalyzes the cyclization activity that produces IGP and AICAR from PRFAR using the ammonia provided by the HisH subunit. This chain is Imidazole glycerol phosphate synthase subunit HisF, found in Pseudomonas fluorescens (strain Pf0-1).